The sequence spans 317 residues: uncharacterized protein (317 aa).

6 helical membrane passes run 14-34, 72-92, 119-139, 196-216, 230-250, and 291-307; these read IPLL…ATVS, LIGF…YGAV, LLFG…LDIA, TLLN…FCKQ, LFLG…ADVL, and SNML…WYTY. Solcar repeat units follow at residues 18–103, 113–217, and 224–313; these read SNDL…LKQR, LENH…CKQK, and LTAF…VSKM.

The protein belongs to the mitochondrial carrier (TC 2.A.29) family.

It localises to the mitochondrion inner membrane. This is an uncharacterized protein from Schizosaccharomyces pombe (strain 972 / ATCC 24843) (Fission yeast).